The chain runs to 476 residues: Protein transport protein Sec61 subunit alpha isoform 1 (476 aa).

At 1–33 the chain is on the cytoplasmic side; that stretch reads MAIKFLEVIKPFCVILPEIQKPERKIQFKEKVL. The helical transmembrane segment at 34-53 threads the bilayer; sequence WTAITLFIFLVCCQIPLFGI. Over 54 to 76 the chain is Lumenal; sequence MSSDSADPFYWMRVILASNRGTL. Residues 77–96 traverse the membrane as a helical segment; sequence MELGISPIVTSGLIMQLLAG. Over 97-117 the chain is Cytoplasmic; sequence AKIIEVGDTPKDRALFNGAQK. The helical transmembrane segment at 118–138 threads the bilayer; the sequence is LFGMIITIGQSIVYVMTGMYG. Topologically, residues 139–144 are lumenal; that stretch reads DPSEMG. The helical transmembrane segment at 145–165 threads the bilayer; sequence AGICLLITIQLFVAGLIVLLL. The Cytoplasmic segment spans residues 166–172; it reads DELLQKG. A helical transmembrane segment spans residues 173 to 193; it reads YGLGSGISLFIATNICETIVW. Residues 194–240 lie on the Lumenal side of the membrane; that stretch reads KAFSPTTVNTGRGMEFEGAIIALFHLLATRTDKVRALREAFYRQNLP. Residues 241-261 traverse the membrane as a helical segment; it reads NLMNLIATIFVFAVVIYFQGF. The Cytoplasmic segment spans residues 262–288; the sequence is RVDLPIKSARYRGQYNTYPIKLFYTSN. Residues 289-309 form a helical membrane-spanning segment; that stretch reads IPIILQSALVSNLYVISQMLS. Topologically, residues 310–354 are lumenal; it reads ARFSGNLLVSLLGTWSDTSSGGPARAYPVGGLCYYLSPPESFGSV. Residues 355-375 traverse the membrane as a helical segment; sequence LEDPVHAVVYIVFMLGSCAFF. The Cytoplasmic portion of the chain corresponds to 376-420; it reads SKTWIEVSGSSAKDVAKQLKEQQMVMRGHRETSMVHELNRYIPTA. The helical transmembrane segment at 421-441 threads the bilayer; the sequence is AAFGGLCIGALSVLADFLGAI. The Lumenal segment spans residues 442–445; sequence GSGT. The helical transmembrane segment at 446–462 threads the bilayer; that stretch reads GILLAVTIIYQYFEIFV. Topologically, residues 463–476 are cytoplasmic; the sequence is KEQSEVGSMGALLF.

This sequence belongs to the SecY/SEC61-alpha family. The SEC61 channel-forming translocon complex consists of channel-forming core components SEC61A1, SEC61B and SEC61G and different auxiliary components such as SEC62 and SEC63. The SEC61 channel associates with the multi-pass translocon (MPT) complex. As to expression, expressed in proximal and distal tubules in kidney (at protein level).

Its subcellular location is the endoplasmic reticulum membrane. Functionally, component of SEC61 channel-forming translocon complex that mediates transport of signal peptide-containing precursor polypeptides across the endoplasmic reticulum (ER). Forms a ribosome receptor and a gated pore in the ER membrane, both functions required for cotranslational translocation of nascent polypeptides. May cooperate with auxiliary protein SEC62, SEC63 and HSPA5/BiP to enable post-translational transport of small presecretory proteins. The SEC61 channel is also involved in ER membrane insertion of transmembrane proteins: it mediates membrane insertion of the first few transmembrane segments of proteins, while insertion of subsequent transmembrane regions of multi-pass membrane proteins is mediated by the multi-pass translocon (MPT) complex. The SEC61 channel cooperates with the translocating protein TRAM1 to import nascent proteins into the ER. Controls the passive efflux of calcium ions from the ER lumen to the cytosol through SEC61 channel, contributing to the maintenance of cellular calcium homeostasis. Plays a critical role in nephrogenesis, specifically at pronephros stage. The chain is Protein transport protein Sec61 subunit alpha isoform 1 (SEC61A1) from Homo sapiens (Human).